The following is a 50-amino-acid chain: Small ribosomal subunit protein eS31 (50 aa).

Cys22, Cys25, Cys40, and Cys43 together coordinate Zn(2+). The C4-type zinc-finger motif lies at 22-43 (CPRCGPGVFMADHGDRWACGKC).

The protein belongs to the eukaryotic ribosomal protein eS31 family. As to quaternary structure, part of the 30S ribosomal subunit. Requires Zn(2+) as cofactor.

The chain is Small ribosomal subunit protein eS31 from Pyrococcus furiosus (strain ATCC 43587 / DSM 3638 / JCM 8422 / Vc1).